Consider the following 515-residue polypeptide: Signal transduction histidine-protein kinase/phosphatase MprB (515 aa).

The Cytoplasmic portion of the chain corresponds to 1–24 (MTLPPQPSRLKPPRNTSSLSLRWR). A helical transmembrane segment spans residues 25 to 45 (VMLLAMSMVAMVVVLMSVAVY). The Extracellular portion of the chain corresponds to 46–165 (AVVSRALYDD…TGQVLGRLGT (120 aa)). A helical transmembrane segment spans residues 166–186 (VLLIVGGVGVAVAAIAGGMVA). In terms of domain architecture, HAMP spans 187-239 (RAGLRPVGRLTQAAERVARTDDLRPIPVFGSDELARLTEAFNMMLRALTESRE). The Cytoplasmic segment spans residues 187–515 (RAGLRPVGRL…GKSRSASKEL (329 aa)). A Histidine kinase domain is found at 247 to 467 (DAGHELRTPL…SFYVMLPGRP (221 aa)). His250 bears the Phosphohistidine; by autocatalysis mark. The disordered stretch occupies residues 468–515 (LTPGGNGTAPVPAAQFDPDMRSAGSRADRRVIKNTETNGKSRSASKEL).

It depends on Mg(2+) as a cofactor. The cofactor is Mn(2+). Autophosphorylated.

The protein localises to the cell membrane. It catalyses the reaction ATP + protein L-histidine = ADP + protein N-phospho-L-histidine.. Member of the two-component regulatory system MprB/MprA which contributes to maintaining a balance among several systems involved in stress resistance and is required for establishment and maintenance of persistent infection in the host. In response to environmental signals MprB acts both as a membrane-associated protein kinase that undergoes autophosphorylation and subsequently transfers the phosphate to MprA, and a protein phosphatase that dephosphorylates phospho-MprA. In Mycobacterium sp. (strain JLS), this protein is Signal transduction histidine-protein kinase/phosphatase MprB (mprB).